The sequence spans 178 residues: Large ribosomal subunit protein uL5 (178 aa).

It belongs to the universal ribosomal protein uL5 family. In terms of assembly, part of the 50S ribosomal subunit; part of the 5S rRNA/L5/L18/L25 subcomplex. Contacts the 5S rRNA and the P site tRNA. Forms a bridge to the 30S subunit in the 70S ribosome.

In terms of biological role, this is one of the proteins that bind and probably mediate the attachment of the 5S RNA into the large ribosomal subunit, where it forms part of the central protuberance. In the 70S ribosome it contacts protein S13 of the 30S subunit (bridge B1b), connecting the 2 subunits; this bridge is implicated in subunit movement. Contacts the P site tRNA; the 5S rRNA and some of its associated proteins might help stabilize positioning of ribosome-bound tRNAs. The protein is Large ribosomal subunit protein uL5 of Acinetobacter baumannii (strain AB0057).